Consider the following 392-residue polypeptide: Immunoglobulin-binding protein EibA (392 aa).

The N-terminal stretch at 1-27 (MSKKFTKAVLSAAMAGVLFGVSFDIMA) is a signal peptide. The tract at residues 28–301 (AEQSYSALNA…IAANTRTLQQ (274 aa)) is surface exposed passenger domain. Over 28-341 (AEQSYSALNA…GLFQPYSVGK (314 aa)) the chain is Extracellular. A coiled-coil region spans residues 174 to 215 (ESANSTIVANELEAQKGKLDAQKGELEAQKKNLGELTTRTDK). The right-handed coiled-coil (RHcc) stretch occupies residues 187 to 230 (AQKGKLDAQKGELEAQKKNLGELTTRTDKIDAAAAATAAKVESR). The segment at 231–256 (TLVGVSSDGTLTRAEGAKNTISVNDG) is saddle domain. The left-handed coiled-coil (LHcc) stretch occupies residues 257–322 (LVALSGRTDR…INENHKEMKR (66 aa)). Residues 299–341 (LQQHSARLDSQQRQINENHKEMKRAAAQSAALTGLFQPYSVGK) are outer membrane translocation of the passenger domain. The next 4 membrane-spanning stretches (beta stranded) occupy residues 342-352 (FNASAAVGGYS), 355-366 (QALAVGVGYRFN), 369-378 (TAAKAGVAFS), and 382-392 (ASWNVGVNFEF). Positions 342-392 (FNASAAVGGYSDEQALAVGVGYRFNEQTAAKAGVAFSDGDASWNVGVNFEF) are translocator domain.

The protein belongs to the autotransporter-2 (AT-2) (TC 1.B.40) family. Eib subfamily. In terms of assembly, homotrimer; can probably form mixed heterotrimers in vivo. Will form mixed heterotrimers with EibD; these are correctly located in the outer membrane and bind IgG Fc, although less well than homotrimers. Does not form trimers with distantly related YadA from Y.enterocolitica; coexpression was lethal and one of the genes is eliminated in vivo. If the full translocator domain (299-392) is exchanged with that of YadA ('368-455'), will form heterotrimers with YadA and vice-versa. In denaturing gels runs as 2 bands of about 121 and 131 kDa; extracting the sample with 88% phenol at 70 degrees Celsius reduces part of the signal to about 45 kDa. Binds the Fc portion of IgG; binds more than 1 Fc per subunit.

It is found in the cell surface. The protein localises to the cell outer membrane. Binds (in a non-immune fashion) to the Fc portion of human IgG but not IgA; binding occurs on the cell surface. Confers the ability to survive exposure to human serum exposure. Binds to the Fc portion of human IgG and to whole mouse antibodies also via Fc, binds more than 1 Fc or IgG. The protein is Immunoglobulin-binding protein EibA of Escherichia coli.